We begin with the raw amino-acid sequence, 78 residues long: DNA-directed RNA polymerase subunit Rpo5 (78 aa).

Belongs to the archaeal Rpo5/eukaryotic RPB5 RNA polymerase subunit family. Part of the RNA polymerase complex.

The protein localises to the cytoplasm. It catalyses the reaction RNA(n) + a ribonucleoside 5'-triphosphate = RNA(n+1) + diphosphate. Its function is as follows. DNA-dependent RNA polymerase (RNAP) catalyzes the transcription of DNA into RNA using the four ribonucleoside triphosphates as substrates. The polypeptide is DNA-directed RNA polymerase subunit Rpo5 (Methanococcoides burtonii (strain DSM 6242 / NBRC 107633 / OCM 468 / ACE-M)).